Here is a 310-residue protein sequence, read N- to C-terminus: Ribosomal protein uL3 glutamine methyltransferase (310 aa).

Belongs to the protein N5-glutamine methyltransferase family. PrmB subfamily.

It catalyses the reaction L-glutaminyl-[ribosomal protein uL3] + S-adenosyl-L-methionine = N(5)-methyl-L-glutaminyl-[ribosomal protein uL3] + S-adenosyl-L-homocysteine + H(+). Methylates large ribosomal subunit protein uL3 on a specific glutamine residue. The chain is Ribosomal protein uL3 glutamine methyltransferase from Vibrio anguillarum (strain ATCC 68554 / 775) (Listonella anguillarum).